We begin with the raw amino-acid sequence, 307 residues long: 2-haloacid dehalogenase, configuration-inverting (307 aa).

This sequence belongs to the HAD-like hydrolase superfamily. S-2-haloalkanoic acid dehalogenase family. As to quaternary structure, homodimer.

The catalysed reaction is an (S)-2-haloacid + H2O = a (2R)-2-hydroxycarboxylate + a halide anion + H(+). It carries out the reaction an (R)-2-haloacid + H2O = a (2S)-2-hydroxycarboxylate + a halide anion + H(+). Functionally, dehalogenates both (S)- and (R)-2-haloalkanoic acids to the corresponding (R)- and (S)-hydroxyalkanoic acids, respectively, with inversion of configuration at C-2. Acts on 2-haloalkanoic acids whose carbon chain lengths are five or less. In Pseudomonas sp. (strain 113), this protein is 2-haloacid dehalogenase, configuration-inverting.